We begin with the raw amino-acid sequence, 544 residues long: Protein angel homolog 2 (544 aa).

Belongs to the CCR4/nocturin family.

The protein is Protein angel homolog 2 (ANGEL2) of Homo sapiens (Human).